Consider the following 644-residue polypeptide: Core protein VP4 (644 aa).

Belongs to the orbivirus VP4 family.

It is found in the virion. Its function is as follows. The VP4 protein is one of the five proteins (with VP1, VP3, VP6 and VP7) which form the inner capsid of the virus. This chain is Core protein VP4 (Segment-4), found in Bluetongue virus 2 (isolate USA) (BTV 2).